The following is a 503-amino-acid chain: Alpha-1,3/1,6-mannosyltransferase ALG2 (503 aa).

Residues asparagine 59, asparagine 173, asparagine 262, and asparagine 403 are each glycosylated (N-linked (GlcNAc...) asparagine). Transmembrane regions (helical) follow at residues 444 to 466 (LWST…LITG) and 473 to 495 (LLLA…WIIV). Asparagine 500 carries an N-linked (GlcNAc...) asparagine glycan.

The protein belongs to the glycosyltransferase group 1 family.

Its subcellular location is the endoplasmic reticulum membrane. It carries out the reaction a beta-D-Man-(1-&gt;4)-beta-D-GlcNAc-(1-&gt;4)-alpha-D-GlcNAc-diphospho-di-trans,poly-cis-dolichol + GDP-alpha-D-mannose = an alpha-D-Man-(1-&gt;3)-beta-D-Man-(1-&gt;4)-beta-D-GlcNAc-(1-&gt;4)-alpha-D-GlcNAc-diphospho-di-trans,poly-cis-dolichol + GDP + H(+). It catalyses the reaction an alpha-D-Man-(1-&gt;3)-beta-D-Man-(1-&gt;4)-beta-D-GlcNAc-(1-&gt;4)-alpha-D-GlcNAc-diphospho-di-trans,poly-cis-dolichol + GDP-alpha-D-mannose = an alpha-D-Man-(1-&gt;3)-[alpha-D-Man-(1-&gt;6)]-beta-D-Man-(1-&gt;4)-beta-D-GlcNAc-(1-&gt;4)-alpha-D-GlcNAc-diphospho-di-trans,poly-cis-dolichol + GDP + H(+). It functions in the pathway protein modification; protein glycosylation. Functionally, mannosylates Man(2)GlcNAc(2)-dolichol diphosphate and Man(1)GlcNAc(2)-dolichol diphosphate to form Man(3)GlcNAc(2)-dolichol diphosphate. This is Alpha-1,3/1,6-mannosyltransferase ALG2 (ALG2) from Kluyveromyces lactis (strain ATCC 8585 / CBS 2359 / DSM 70799 / NBRC 1267 / NRRL Y-1140 / WM37) (Yeast).